A 104-amino-acid chain; its full sequence is Large ribosomal subunit protein uL23 (104 aa).

Belongs to the universal ribosomal protein uL23 family. As to quaternary structure, part of the 50S ribosomal subunit. Contacts protein L29, and trigger factor when it is bound to the ribosome.

In terms of biological role, one of the early assembly proteins it binds 23S rRNA. One of the proteins that surrounds the polypeptide exit tunnel on the outside of the ribosome. Forms the main docking site for trigger factor binding to the ribosome. The chain is Large ribosomal subunit protein uL23 from Polynucleobacter necessarius subsp. necessarius (strain STIR1).